We begin with the raw amino-acid sequence, 149 residues long: NPC intracellular cholesterol transporter 2 (149 aa).

Positions 1-19 (MRFLTVAFLFLALSASALA) are cleaved as a signal peptide. 3 cysteine pairs are disulfide-bonded: cysteine 27–cysteine 140, cysteine 42–cysteine 47, and cysteine 93–cysteine 99. N-linked (GlcNAc...) asparagine glycosylation occurs at asparagine 58. N6-acetyllysine is present on lysine 116.

The protein belongs to the NPC2 family. As to quaternary structure, interacts with NPC1 (via the second lumenal domain) in a cholestrol-dependent manner. Interacts with NUS1/NgBR, the interaction stabilizes NCP2 and regulates cholesterol trafficking. Interacts with DHDDS. Interacts with NEDD4L (via C2 domain). Interacts with NPC1L1. Expressed in kidney, spleen, liver and mammary gland, but not in testis.

It localises to the secreted. The protein resides in the endoplasmic reticulum. The protein localises to the lysosome. It carries out the reaction cholesterol(in) = cholesterol(out). Its function is as follows. Intracellular cholesterol transporter which acts in concert with NPC1 and plays an important role in the egress of cholesterol from the lysosomal compartment. Unesterified cholesterol that has been released from LDLs in the lumen of the late endosomes/lysosomes is transferred by NPC2 to the cholesterol-binding pocket in the N-terminal domain of NPC1. May bind and mobilize cholesterol that is associated with membranes. NPC2 binds cholesterol with a 1:1 stoichiometry. Can bind a variety of sterols, including lathosterol, desmosterol and the plant sterols stigmasterol and beta-sitosterol. The secreted form of NCP2 regulates biliary cholesterol secretion via stimulation of ABCG5/ABCG8-mediated cholesterol transport. This is NPC intracellular cholesterol transporter 2 from Bos taurus (Bovine).